Consider the following 417-residue polypeptide: Gamma-glutamyl phosphate reductase (417 aa).

The protein belongs to the gamma-glutamyl phosphate reductase family.

Its subcellular location is the cytoplasm. It catalyses the reaction L-glutamate 5-semialdehyde + phosphate + NADP(+) = L-glutamyl 5-phosphate + NADPH + H(+). Its pathway is amino-acid biosynthesis; L-proline biosynthesis; L-glutamate 5-semialdehyde from L-glutamate: step 2/2. Functionally, catalyzes the NADPH-dependent reduction of L-glutamate 5-phosphate into L-glutamate 5-semialdehyde and phosphate. The product spontaneously undergoes cyclization to form 1-pyrroline-5-carboxylate. The protein is Gamma-glutamyl phosphate reductase of Enterobacter sp. (strain 638).